We begin with the raw amino-acid sequence, 539 residues long: T-complex protein 1 subunit delta (539 aa).

The disordered stretch occupies residues 1-29; that stretch reads MPENVAPRSGATAGAAGGRGKGAYQDRDK. Arg-19 carries the omega-N-methylarginine modification. Lys-21 bears the N6-acetyllysine mark. Ser-36 bears the Phosphoserine mark. Residue Gly-53 coordinates ADP. Gly-53 is an ATP binding site. Position 104 (Asp-104) interacts with Mg(2+). ADP-binding residues include Gly-105, Thr-106, Thr-107, Ser-108, Asn-172, Ser-173, and Lys-174. The ATP site is built by Gly-105 and Thr-106. Residue Lys-174 coordinates ATP. 2 positions are modified to phosphoserine: Ser-184 and Ser-202. Residues Lys-288, Lys-302, Lys-319, and Lys-326 each carry the N6-acetyllysine modification. Residue Gly-425 participates in ADP binding. Ser-444 is modified (phosphoserine). Gln-510 serves as a coordination point for ADP.

The protein belongs to the TCP-1 chaperonin family. As to quaternary structure, component of the chaperonin-containing T-complex (TRiC), a hexadecamer composed of two identical back-to-back stacked rings enclosing a protein folding chamber. Each ring is made up of eight different subunits: TCP1/CCT1, CCT2, CCT3, CCT4, CCT5, CCT6A/CCT6, CCT7, CCT8. Interacts with PACRG. Interacts with DNAAF4. Interacts with DLEC1.

It is found in the cytoplasm. The protein localises to the melanosome. It localises to the cytoskeleton. The protein resides in the microtubule organizing center. Its subcellular location is the centrosome. It is found in the cilium basal body. It carries out the reaction ATP + H2O = ADP + phosphate + H(+). In terms of biological role, component of the chaperonin-containing T-complex (TRiC), a molecular chaperone complex that assists the folding of actin, tubulin and other proteins upon ATP hydrolysis. The TRiC complex mediates the folding of WRAP53/TCAB1, thereby regulating telomere maintenance. As part of the TRiC complex may play a role in the assembly of BBSome, a complex involved in ciliogenesis regulating transports vesicles to the cilia. This is T-complex protein 1 subunit delta (CCT4) from Homo sapiens (Human).